Here is a 247-residue protein sequence, read N- to C-terminus: ATP synthase subunit a, plastid (247 aa).

Helical transmembrane passes span 33–53 (FLVH…LLGS), 95–115 (VPFI…GALL), 134–154 (INTT…AGIL), 199–219 (LVVV…VMLL), and 220–240 (GLFT…AYIG).

The protein belongs to the ATPase A chain family. As to quaternary structure, F-type ATPases have 2 components, CF(1) - the catalytic core - and CF(0) - the membrane proton channel. CF(1) has five subunits: alpha(3), beta(3), gamma(1), delta(1), epsilon(1). CF(0) has four main subunits: a, b, b' and c.

It localises to the plastid membrane. Functionally, key component of the proton channel; it plays a direct role in the translocation of protons across the membrane. In Cuscuta exaltata (Tall dodder), this protein is ATP synthase subunit a, plastid.